Reading from the N-terminus, the 716-residue chain is MGSHGKGKRDRSGRQKKRRDESESGSESESYTSDSDGSDDLSPPRSSRRKKGSSSRRTRRRSSSDDSSDSDGGRKSKKRSSSKDYSEEKVTEYMSKKAQKKALRAAKKLKTQSVSGYSNDSNPFGDSNLTETFVWRKKIEKDVHRGVPLEEFSVKAEKRRHRERMTEVEKVKKRREERAVEKARHEEEMALLARERARAEFHDWEKKEEEFHFDQSKVRSEIRLREGRLKPIDVLCKHLDGSDDLDIELSEPYMVFKKKKVRIGIWLNFQLSITNVYVEAEYKNDSACLLLRSRVDILLNKGLTVKDMEELRDDIKMYLDLDRATPTRVQYWEALIVVCDWELAEARKRDALDRARVRGEEPPAELLAQERGLHAGVEADVRKLLDGKTHAELVELQLDIESQLRSGSAKVVEYWEAVLKRLEIYKAKACLKEIHAEMLRRHLHRLEQLSEGEDDVEVNPGLTRVVEENEEEINDTNLSDAEEAFSPEPVAEEEEADEAAEAAGSFSPELMHGDDREEAIDPEEDKKLLQMKRMIVLEKQKKRLKEAMDSKPAPVEDNLELKAMKAMGAMEEGDAIFGSNAEVNLDSEVYWWHDKYRPRKPKYFNRVHTGYEWNKYNQTHYDHDNPPPKIVQGYKFNIFYPDLVDKIKAPIYTIEKDGTSAETCMIRFHAGPPYEDIAFRIVNKEWEYSHKKGFKCTFERGILHLYFNFKRHRYRR.

Residues 1-104 form a disordered region; it reads MGSHGKGKRD…SKKAQKKALR (104 aa). Residues 10 to 22 show a composition bias toward basic and acidic residues; it reads DRSGRQKKRRDES. Residues 25–45 show a composition bias toward low complexity; it reads GSESESYTSDSDGSDDLSPPR. Positions 46 to 61 are enriched in basic residues; that stretch reads SSRRKKGSSSRRTRRR. Over residues 81–95 the composition is skewed to basic and acidic residues; the sequence is SSKDYSEEKVTEYMS. Residues 153-201 are a coiled coil; sequence SVKAEKRRHRERMTEVEKVKKRREERAVEKARHEEEMALLARERARAEF. Ser450 bears the Phosphoserine mark. Residues 466–525 are disordered; it reads VEENEEEINDTNLSDAEEAFSPEPVAEEEEADEAAEAAGSFSPELMHGDDREEAIDPEED. A compositionally biased stretch (acidic residues) spans 468–500; the sequence is ENEEEINDTNLSDAEEAFSPEPVAEEEEADEAA.

It belongs to the CACTIN family. In terms of assembly, interacts with At5g63440.

The protein localises to the nucleus speckle. Its function is as follows. Plays a role in pre-mRNA splicing by facilitating excision of a subset of introns. Required for embryogenesis. In Arabidopsis thaliana (Mouse-ear cress), this protein is Splicing factor Cactin (CTN).